A 340-amino-acid polypeptide reads, in one-letter code: Dihydroorotase (340 aa).

Positions 14 and 16 each coordinate Zn(2+). Residues 16–18 and Asn42 contribute to the substrate site; that span reads HLR. Residues Lys100, His137, and His175 each contribute to the Zn(2+) site. Lys100 bears the N6-carboxylysine mark. His137 contacts substrate. Leu220 contacts substrate. Asp248 serves as a coordination point for Zn(2+). The active site involves Asp248. Residues His252 and Ala264 each coordinate substrate.

Belongs to the metallo-dependent hydrolases superfamily. DHOase family. Class II DHOase subfamily. Homodimer. Zn(2+) serves as cofactor.

The enzyme catalyses (S)-dihydroorotate + H2O = N-carbamoyl-L-aspartate + H(+). The protein operates within pyrimidine metabolism; UMP biosynthesis via de novo pathway; (S)-dihydroorotate from bicarbonate: step 3/3. Functionally, catalyzes the reversible cyclization of carbamoyl aspartate to dihydroorotate. This Sphingopyxis alaskensis (strain DSM 13593 / LMG 18877 / RB2256) (Sphingomonas alaskensis) protein is Dihydroorotase.